We begin with the raw amino-acid sequence, 142 residues long: MERTLLLVKPDGVNRGLSGEILGRMEKLGLKLIGLRMLQMDAVLADKHYAPHRARPFFKDLVTYITSGPITAAVFEGENAVEKMRKAMGATDPAKSEKGTVRGDLGIDIEQNTVHGSDSAENAKHEISLFFSESELVNYDRR.

ATP contacts are provided by Lys-9, Phe-57, Arg-85, Thr-91, Arg-102, and Asn-112. The active-site Pros-phosphohistidine intermediate is the His-115.

It belongs to the NDK family. Homotetramer. Mg(2+) serves as cofactor.

It is found in the cytoplasm. The catalysed reaction is a 2'-deoxyribonucleoside 5'-diphosphate + ATP = a 2'-deoxyribonucleoside 5'-triphosphate + ADP. It carries out the reaction a ribonucleoside 5'-diphosphate + ATP = a ribonucleoside 5'-triphosphate + ADP. Major role in the synthesis of nucleoside triphosphates other than ATP. The ATP gamma phosphate is transferred to the NDP beta phosphate via a ping-pong mechanism, using a phosphorylated active-site intermediate. This is Nucleoside diphosphate kinase from Dehalococcoides mccartyi (strain ATCC BAA-2100 / JCM 16839 / KCTC 5957 / BAV1).